A 162-amino-acid polypeptide reads, in one-letter code: D-aminoacyl-tRNA deacylase (162 aa).

Positions 143-144 match the Gly-cisPro motif, important for rejection of L-amino acids motif; the sequence is GP.

This sequence belongs to the DTD family. In terms of assembly, homodimer.

It localises to the cytoplasm. The enzyme catalyses glycyl-tRNA(Ala) + H2O = tRNA(Ala) + glycine + H(+). It carries out the reaction a D-aminoacyl-tRNA + H2O = a tRNA + a D-alpha-amino acid + H(+). Its function is as follows. An aminoacyl-tRNA editing enzyme that deacylates mischarged D-aminoacyl-tRNAs. Also deacylates mischarged glycyl-tRNA(Ala), protecting cells against glycine mischarging by AlaRS. Acts via tRNA-based rather than protein-based catalysis; rejects L-amino acids rather than detecting D-amino acids in the active site. By recycling D-aminoacyl-tRNA to D-amino acids and free tRNA molecules, this enzyme counteracts the toxicity associated with the formation of D-aminoacyl-tRNA entities in vivo and helps enforce protein L-homochirality. The sequence is that of D-aminoacyl-tRNA deacylase from Nitratidesulfovibrio vulgaris (strain ATCC 29579 / DSM 644 / CCUG 34227 / NCIMB 8303 / VKM B-1760 / Hildenborough) (Desulfovibrio vulgaris).